A 349-amino-acid chain; its full sequence is N-acetyl-gamma-glutamyl-phosphate reductase (349 aa).

The active site involves cysteine 149.

The protein belongs to the NAGSA dehydrogenase family. Type 1 subfamily.

It localises to the cytoplasm. It carries out the reaction N-acetyl-L-glutamate 5-semialdehyde + phosphate + NADP(+) = N-acetyl-L-glutamyl 5-phosphate + NADPH + H(+). Its pathway is amino-acid biosynthesis; L-arginine biosynthesis; N(2)-acetyl-L-ornithine from L-glutamate: step 3/4. Its function is as follows. Catalyzes the NADPH-dependent reduction of N-acetyl-5-glutamyl phosphate to yield N-acetyl-L-glutamate 5-semialdehyde. In Acinetobacter baumannii (strain AB307-0294), this protein is N-acetyl-gamma-glutamyl-phosphate reductase.